The primary structure comprises 88 residues: Small ribosomal subunit protein uS15 (88 aa).

The protein belongs to the universal ribosomal protein uS15 family. Part of the 30S ribosomal subunit. Forms a bridge to the 50S subunit in the 70S ribosome, contacting the 23S rRNA.

One of the primary rRNA binding proteins, it binds directly to 16S rRNA where it helps nucleate assembly of the platform of the 30S subunit by binding and bridging several RNA helices of the 16S rRNA. Functionally, forms an intersubunit bridge (bridge B4) with the 23S rRNA of the 50S subunit in the ribosome. This is Small ribosomal subunit protein uS15 from Sorangium cellulosum (strain So ce56) (Polyangium cellulosum (strain So ce56)).